Consider the following 163-residue polypeptide: Crossover junction endodeoxyribonuclease RuvC (163 aa).

Catalysis depends on residues D7, E68, and H142. 3 residues coordinate Mg(2+): D7, E68, and H142.

This sequence belongs to the RuvC family. In terms of assembly, homodimer which binds Holliday junction (HJ) DNA. The HJ becomes 2-fold symmetrical on binding to RuvC with unstacked arms; it has a different conformation from HJ DNA in complex with RuvA. In the full resolvosome a probable DNA-RuvA(4)-RuvB(12)-RuvC(2) complex forms which resolves the HJ. Requires Mg(2+) as cofactor.

Its subcellular location is the cytoplasm. It catalyses the reaction Endonucleolytic cleavage at a junction such as a reciprocal single-stranded crossover between two homologous DNA duplexes (Holliday junction).. The RuvA-RuvB-RuvC complex processes Holliday junction (HJ) DNA during genetic recombination and DNA repair. Endonuclease that resolves HJ intermediates. Cleaves cruciform DNA by making single-stranded nicks across the HJ at symmetrical positions within the homologous arms, yielding a 5'-phosphate and a 3'-hydroxyl group; requires a central core of homology in the junction. The consensus cleavage sequence is 5'-(A/T)TT(C/G)-3'. Cleavage occurs on the 3'-side of the TT dinucleotide at the point of strand exchange. HJ branch migration catalyzed by RuvA-RuvB allows RuvC to scan DNA until it finds its consensus sequence, where it cleaves and resolves the cruciform DNA. The polypeptide is Crossover junction endodeoxyribonuclease RuvC (Anaplasma phagocytophilum (strain HZ)).